A 256-amino-acid chain; its full sequence is uncharacterized protein (256 aa).

The NADP(+) site is built by Ile18, Ser37, Lys46, Asp66, Tyr164, Lys168, Val197, and Thr199. The Proton donor role is filled by Tyr164. The active-site Lowers pKa of active site Tyr is the Lys168.

This sequence belongs to the short-chain dehydrogenases/reductases (SDR) family.

It is found in the cytoplasm. This is an uncharacterized protein from Saccharomyces cerevisiae (strain ATCC 204508 / S288c) (Baker's yeast).